The sequence spans 259 residues: MFFVLSPAKNLNEKDPCPVSEFTQPDLLAESEILMRQLRELAPQQIAELMHVSDKIALLNAERNAAWHTPFTPENAKQAVFMFNGDVYEGMDANTLNTNQIQYLQGHVRLLSGLYGLLRPLDLIQPYRLEMGTSFANLRGKNLYEFWGGIITNLLNDTLAQAGSNTLVNLASQEYFKSVNTKKLRARLITPIFKDEKNGKYKIISFYAKRARGLMVRYAAEHNITDPEMLKNFNYEGYAFNDAASNESEWVFMRSEQIK.

It belongs to the UPF0246 family.

The protein is UPF0246 protein NGO_0461 of Neisseria gonorrhoeae (strain ATCC 700825 / FA 1090).